A 337-amino-acid chain; its full sequence is LIX1-like protein (337 aa).

Positions 1–64 (METMRAQRLQ…PLLLSGAPGL (64 aa)) are disordered. Low complexity predominate over residues 26-38 (PGVTGAAAATATP). Residues 39 to 56 (PAGPPPAPPPPAPPPPPL) show a composition bias toward pro residues.

It belongs to the LIX1 family.

In Homo sapiens (Human), this protein is LIX1-like protein (LIX1L).